The sequence spans 127 residues: Large ribosomal subunit protein bL17 (127 aa).

The protein belongs to the bacterial ribosomal protein bL17 family. In terms of assembly, part of the 50S ribosomal subunit. Contacts protein L32.

In Aeromonas hydrophila subsp. hydrophila (strain ATCC 7966 / DSM 30187 / BCRC 13018 / CCUG 14551 / JCM 1027 / KCTC 2358 / NCIMB 9240 / NCTC 8049), this protein is Large ribosomal subunit protein bL17.